Consider the following 314-residue polypeptide: tRNA-cytidine(32) 2-sulfurtransferase (314 aa).

Residues 57–62 carry the PP-loop motif motif; sequence SGGKDS. Residues Cys132, Cys135, and Cys223 each contribute to the [4Fe-4S] cluster site.

Belongs to the TtcA family. Homodimer. It depends on Mg(2+) as a cofactor. The cofactor is [4Fe-4S] cluster.

Its subcellular location is the cytoplasm. It carries out the reaction cytidine(32) in tRNA + S-sulfanyl-L-cysteinyl-[cysteine desulfurase] + AH2 + ATP = 2-thiocytidine(32) in tRNA + L-cysteinyl-[cysteine desulfurase] + A + AMP + diphosphate + H(+). Its pathway is tRNA modification. Its function is as follows. Catalyzes the ATP-dependent 2-thiolation of cytidine in position 32 of tRNA, to form 2-thiocytidine (s(2)C32). The sulfur atoms are provided by the cysteine/cysteine desulfurase (IscS) system. The sequence is that of tRNA-cytidine(32) 2-sulfurtransferase from Alkalilimnicola ehrlichii (strain ATCC BAA-1101 / DSM 17681 / MLHE-1).